The sequence spans 249 residues: Glucosamine-6-phosphate deaminase (249 aa).

The active-site Proton acceptor; for enolization step is the Asp-67. Asn-136 (for ring-opening step) is an active-site residue. The Proton acceptor; for ring-opening step role is filled by His-138. Glu-143 acts as the For ring-opening step in catalysis.

The protein belongs to the glucosamine/galactosamine-6-phosphate isomerase family. NagB subfamily.

The enzyme catalyses alpha-D-glucosamine 6-phosphate + H2O = beta-D-fructose 6-phosphate + NH4(+). It functions in the pathway amino-sugar metabolism; N-acetylneuraminate degradation; D-fructose 6-phosphate from N-acetylneuraminate: step 5/5. Functionally, catalyzes the reversible isomerization-deamination of glucosamine 6-phosphate (GlcN6P) to form fructose 6-phosphate (Fru6P) and ammonium ion. In Clostridium botulinum (strain Eklund 17B / Type B), this protein is Glucosamine-6-phosphate deaminase.